A 605-amino-acid polypeptide reads, in one-letter code: Elongation factor 4 (605 aa).

Residues 11–193 (KNIRNFSIIA…TLVDVIPAPT (183 aa)) enclose the tr-type G domain. Residues 23-28 (DHGKST) and 140-143 (NKID) contribute to the GTP site.

It belongs to the TRAFAC class translation factor GTPase superfamily. Classic translation factor GTPase family. LepA subfamily.

The protein resides in the cell inner membrane. The catalysed reaction is GTP + H2O = GDP + phosphate + H(+). Required for accurate and efficient protein synthesis under certain stress conditions. May act as a fidelity factor of the translation reaction, by catalyzing a one-codon backward translocation of tRNAs on improperly translocated ribosomes. Back-translocation proceeds from a post-translocation (POST) complex to a pre-translocation (PRE) complex, thus giving elongation factor G a second chance to translocate the tRNAs correctly. Binds to ribosomes in a GTP-dependent manner. This Acinetobacter baumannii (strain AB307-0294) protein is Elongation factor 4.